Here is a 179-residue protein sequence, read N- to C-terminus: Large ribosomal subunit protein uL6 (179 aa).

The protein belongs to the universal ribosomal protein uL6 family. In terms of assembly, part of the 50S ribosomal subunit.

Its function is as follows. This protein binds to the 23S rRNA, and is important in its secondary structure. It is located near the subunit interface in the base of the L7/L12 stalk, and near the tRNA binding site of the peptidyltransferase center. This chain is Large ribosomal subunit protein uL6, found in Chlorobium luteolum (strain DSM 273 / BCRC 81028 / 2530) (Pelodictyon luteolum).